Here is a 1052-residue protein sequence, read N- to C-terminus: Germline survival defective-1 (1052 aa).

Positions Met1–Ala25 are cleaved as a signal peptide. 5 disordered regions span residues Leu41–Asn320, Val478–Pro543, Pro667–Glu689, Lys933–Ala965, and Ser1033–Phe1052. A compositionally biased stretch (low complexity) spans Ala67 to Thr145. The span at Thr163–Gly172 shows a compositional bias: polar residues. Basic and acidic residues predominate over residues Thr178–Thr190. Over residues Asn244–Ile279 the composition is skewed to low complexity. Positions Lys305–Asn320 are enriched in basic and acidic residues. The segment at Gln424 to Ser732 is gld-4 binding. A compositionally biased stretch (polar residues) spans Gly480–Pro514. Residues Asp674–Glu689 show a composition bias toward acidic residues. Residues Pro892–Phe1052 form a gld-3 binding region. A compositionally biased stretch (low complexity) spans Glu950–Ser963. Residues Gly1038–Phe1052 show a composition bias toward gly residues.

In terms of assembly, isoform C interacts (via C-terminus) with gld-3 isoform A (via C-terminus) in an RNA-independent manner. Isoform C interacts with gld-4. Expressed in the germline (at protein level). In the early embryo is expressed in all cells, then becomes gradually restricted to the germ cell lineage and enriches in P granules (at protein level). In adult hermaphrodites, is expressed in the mitotic region, accumulates during early stages of meiotic prophase I and is slightly less abundant in maturing oocytes (at protein level).

It is found in the cytoplasm. It localises to the cytoplasmic granule. Functionally, required maternally for germline survival by forming a maternal complex with gld-3. During hermaphrodite development forms a complex with gld-3 which promotes the sperm/oocyte switch freeing the translational repressor fbf to turn off sperm promoting factors. Required for proper oocyte differentiation and oogenic meiotic arrest. Stimulates the enzymatic activity of gld-4 and together they prevent gld-1 mRNA degradation. The polypeptide is Germline survival defective-1 (Caenorhabditis elegans).